The primary structure comprises 292 residues: NAD kinase (292 aa).

D73 functions as the Proton acceptor in the catalytic mechanism. Residues 73-74 (DG), 147-148 (NE), H158, R175, D177, 188-193 (TAYSLS), and Q247 contribute to the NAD(+) site.

Belongs to the NAD kinase family. Requires a divalent metal cation as cofactor.

Its subcellular location is the cytoplasm. It carries out the reaction NAD(+) + ATP = ADP + NADP(+) + H(+). Involved in the regulation of the intracellular balance of NAD and NADP, and is a key enzyme in the biosynthesis of NADP. Catalyzes specifically the phosphorylation on 2'-hydroxyl of the adenosine moiety of NAD to yield NADP. The chain is NAD kinase from Photorhabdus laumondii subsp. laumondii (strain DSM 15139 / CIP 105565 / TT01) (Photorhabdus luminescens subsp. laumondii).